Reading from the N-terminus, the 122-residue chain is Serum amyloid A-1 protein (122 aa).

The first 19 residues, 1 to 19 (MKLLTSLVFCSLLLGVCHG), serve as a signal peptide directing secretion. Positions 20–45 (GFFSFVHEAFQGAGDMWRAYTDMKEA) are important for amyloid formation. Residues 91-108 (HEDTIADQEANRHGRSGK) are compositionally biased toward basic and acidic residues. The tract at residues 91–122 (HEDTIADQEANRHGRSGKDPNYYRPPGLPDKY) is disordered.

This sequence belongs to the SAA family. Homohexamer; dimer of trimers. Can form amyloid fibrils after partial proteolysis; the native, undenatured protein does not form amyloid fibrils (in vitro). Apolipoprotein of the HDL complex. Binds to heparin. In terms of tissue distribution, detected in blood plasma (at protein level). Detected in liver.

The protein localises to the secreted. Major acute phase protein. This Mus musculus (Mouse) protein is Serum amyloid A-1 protein (Saa1).